The chain runs to 380 residues: DNA replication and repair protein RecF (380 aa).

30–37 lines the ATP pocket; it reads GENAQGKT.

Belongs to the RecF family.

The protein localises to the cytoplasm. Functionally, the RecF protein is involved in DNA metabolism; it is required for DNA replication and normal SOS inducibility. RecF binds preferentially to single-stranded, linear DNA. It also seems to bind ATP. This Synechococcus sp. (strain JA-3-3Ab) (Cyanobacteria bacterium Yellowstone A-Prime) protein is DNA replication and repair protein RecF.